The primary structure comprises 511 residues: Serine hydroxymethyltransferase (511 aa).

An N6-(pyridoxal phosphate)lysine modification is found at Lys-287.

It belongs to the SHMT family. Homotetramer. Requires pyridoxal 5'-phosphate as cofactor.

The catalysed reaction is (6R)-5,10-methylene-5,6,7,8-tetrahydrofolate + glycine + H2O = (6S)-5,6,7,8-tetrahydrofolate + L-serine. It participates in one-carbon metabolism; tetrahydrofolate interconversion. Interconversion of serine and glycine. The sequence is that of Serine hydroxymethyltransferase from Caenorhabditis briggsae.